A 201-amino-acid chain; its full sequence is Large ribosomal subunit protein uL4 (201 aa).

The disordered stretch occupies residues 45-73 (AQKTRAEVTGSGKKPWRQKGTGRARAGSV).

This sequence belongs to the universal ribosomal protein uL4 family. Part of the 50S ribosomal subunit.

Functionally, one of the primary rRNA binding proteins, this protein initially binds near the 5'-end of the 23S rRNA. It is important during the early stages of 50S assembly. It makes multiple contacts with different domains of the 23S rRNA in the assembled 50S subunit and ribosome. Its function is as follows. Forms part of the polypeptide exit tunnel. The polypeptide is Large ribosomal subunit protein uL4 (Yersinia pseudotuberculosis serotype O:1b (strain IP 31758)).